Here is a 107-residue protein sequence, read N- to C-terminus: UPF0145 protein ECA2666 (107 aa).

This sequence belongs to the UPF0145 family.

This is UPF0145 protein ECA2666 from Pectobacterium atrosepticum (strain SCRI 1043 / ATCC BAA-672) (Erwinia carotovora subsp. atroseptica).